Reading from the N-terminus, the 321-residue chain is MLRTAIRNNVQVSQKRTYIMSTIASTFLGSILFSKNNQLASKMENGELHMPKDPTLSYLNNNNSNNQAEPYFKRREPDYPGHVPLYNYEKFLMFLGSSIGSFFHPEENKYIVALGESTAIEPILKKLQKTMLSDEIGRQILKEKPRITSTSLNLDYLRSLPDNTIGKNYINWLDKEGVSPDTRVQVKYIDNEELSYIFQRYRECHDFYHAITGLPIIIEGEISVKVFEFMNIGIPMTGLGALFAPLRLKSSQRKRLREIYYPWAIKNGIYSKPLINVYWEKILEQDVDEFRKQMGIETPPDLRNMRKEYFARKKLEKQGKL.

H205, D206, H209, and E221 together coordinate Zn(2+).

Belongs to the COQ4 family. Component of a multi-subunit COQ enzyme complex, composed of at least COQ3, COQ4, COQ5, COQ6, COQ7 and COQ9. The cofactor is Zn(2+).

The protein localises to the mitochondrion inner membrane. It catalyses the reaction a 4-hydroxy-3-methoxy-5-(all-trans-polyprenyl)benzoate + H(+) = a 2-methoxy-6-(all-trans-polyprenyl)phenol + CO2. The protein operates within cofactor biosynthesis; ubiquinone biosynthesis. In terms of biological role, lyase that catalyzes the C1-decarboxylation of 4-hydroxy-3-methoxy-5-(all-trans-polyprenyl)benzoic acid into 2-methoxy-6-(all-trans-polyprenyl)phenol during ubiquinone biosynthesis. The protein is Ubiquinone biosynthesis protein COQ4, mitochondrial of Candida tropicalis (strain ATCC MYA-3404 / T1) (Yeast).